Consider the following 119-residue polypeptide: Large ribosomal subunit protein uL24 (119 aa).

This sequence belongs to the universal ribosomal protein uL24 family. As to quaternary structure, part of the 50S ribosomal subunit.

Its function is as follows. One of two assembly initiator proteins, it binds directly to the 5'-end of the 23S rRNA, where it nucleates assembly of the 50S subunit. In terms of biological role, one of the proteins that surrounds the polypeptide exit tunnel on the outside of the subunit. The polypeptide is Large ribosomal subunit protein uL24 (Paenarthrobacter aurescens (strain TC1)).